Consider the following 156-residue polypeptide: Small ribosomal subunit protein uS7 (156 aa).

Belongs to the universal ribosomal protein uS7 family. As to quaternary structure, part of the 30S ribosomal subunit. Contacts proteins S9 and S11.

Functionally, one of the primary rRNA binding proteins, it binds directly to 16S rRNA where it nucleates assembly of the head domain of the 30S subunit. Is located at the subunit interface close to the decoding center, probably blocks exit of the E-site tRNA. The protein is Small ribosomal subunit protein uS7 of Campylobacter fetus subsp. fetus (strain 82-40).